Here is a 360-residue protein sequence, read N- to C-terminus: Phospho-N-acetylmuramoyl-pentapeptide-transferase (360 aa).

The next 10 helical transmembrane spans lie at 19–39 (LTYL…LSIF), 73–93 (TMGG…WADL), 95–115 (SVYT…GWTD), 136–156 (YLSL…DTPI), 173–193 (GILF…AVNL), 199–219 (GLAI…AYLS), 233–253 (IAGA…GLGF), 263–283 (VFMG…VAVV), 288–308 (LAFA…MIQV), and 338–358 (VTIR…STLK).

Belongs to the glycosyltransferase 4 family. MraY subfamily. Mg(2+) serves as cofactor.

It localises to the cell inner membrane. It carries out the reaction UDP-N-acetyl-alpha-D-muramoyl-L-alanyl-gamma-D-glutamyl-meso-2,6-diaminopimeloyl-D-alanyl-D-alanine + di-trans,octa-cis-undecaprenyl phosphate = di-trans,octa-cis-undecaprenyl diphospho-N-acetyl-alpha-D-muramoyl-L-alanyl-D-glutamyl-meso-2,6-diaminopimeloyl-D-alanyl-D-alanine + UMP. It functions in the pathway cell wall biogenesis; peptidoglycan biosynthesis. Catalyzes the initial step of the lipid cycle reactions in the biosynthesis of the cell wall peptidoglycan: transfers peptidoglycan precursor phospho-MurNAc-pentapeptide from UDP-MurNAc-pentapeptide onto the lipid carrier undecaprenyl phosphate, yielding undecaprenyl-pyrophosphoryl-MurNAc-pentapeptide, known as lipid I. The sequence is that of Phospho-N-acetylmuramoyl-pentapeptide-transferase from Dichelobacter nodosus (strain VCS1703A).